We begin with the raw amino-acid sequence, 907 residues long: Putative ATP-dependent DNA helicase DDX11-like protein 8 (907 aa).

Residues 9-447 (GAIHFPFPFT…KNLMYLKQIL (439 aa)) enclose the Helicase ATP-binding domain. 44-51 (SPTGTGKS) contributes to the ATP binding site. The disordered stretch occupies residues 202 to 222 (YESDEEKKVASGHRVDEDEDD). The segment covering 206–217 (EEKKVASGHRVD) has biased composition (basic and acidic residues). Residue S264 is modified to Phosphoserine. Residues C269 and C287 each contribute to the [4Fe-4S] cluster site. The segment covering 291–306 (QRSRHEKKKGAEEEKP) has biased composition (basic and acidic residues). The disordered stretch occupies residues 291–314 (QRSRHEKKKGAEEEKPKRRRQEKQ). [4Fe-4S] cluster is bound by residues C317 and C352. A DEAH motif is present at residues 395 to 398 (DEAH).

It belongs to the DEAD box helicase family. DEAH subfamily. DDX11/CHL1 sub-subfamily. [4Fe-4S] cluster is required as a cofactor.

The protein resides in the nucleus. It localises to the nucleolus. Putative DNA helicase. In Homo sapiens (Human), this protein is Putative ATP-dependent DNA helicase DDX11-like protein 8 (DDX11L8).